The chain runs to 433 residues: Probable imidazolonepropionase (433 aa).

4-imidazolone-5-propanoate-binding residues include tyrosine 160 and histidine 193. Position 160 (tyrosine 160) interacts with N-formimidoyl-L-glutamate. Histidine 261 provides a ligand contact to Fe(3+). Histidine 261 contributes to the Zn(2+) binding site. Glutamate 264 is a binding site for 4-imidazolone-5-propanoate. Aspartate 335 contributes to the Fe(3+) binding site. Aspartate 335 serves as a coordination point for Zn(2+). An N-formimidoyl-L-glutamate-binding site is contributed by asparagine 337.

Belongs to the metallo-dependent hydrolases superfamily. HutI family. It depends on Zn(2+) as a cofactor. Fe(3+) serves as cofactor.

The enzyme catalyses 4-imidazolone-5-propanoate + H2O = N-formimidoyl-L-glutamate. It participates in amino-acid degradation; L-histidine degradation into L-glutamate; N-formimidoyl-L-glutamate from L-histidine: step 3/3. The chain is Probable imidazolonepropionase (amdhd1) from Danio rerio (Zebrafish).